Here is a 342-residue protein sequence, read N- to C-terminus: viral G-protein coupled receptor (342 aa).

Topologically, residues 1–51 (MAAEDFLTIFLDDDESWNETLNMSGYDYSGNFSLEVSVCEMTTVVPYTWNV) are extracellular. N-linked (GlcNAc...) asparagine; by host glycosylation is found at asparagine 18, asparagine 22, and asparagine 31. The helical transmembrane segment at 52 to 72 (GILSLIFLINVLGNGLVTYIF) threads the bilayer. The Cytoplasmic segment spans residues 73 to 92 (CKHRSRAGAIDILLLGICLN). The chain crosses the membrane as a helical span at residues 93-113 (SLCLSISLLAEVLMFLFPNII). Residues 114–121 (STGLCRLE) lie on the Extracellular side of the membrane. The helical transmembrane segment at 122 to 142 (IFFYYLYVYLDIFSVVCVSLV) threads the bilayer. The Cytoplasmic segment spans residues 143 to 159 (RYLLVAYSTRSWPKKQS). The helical transmembrane segment at 160-180 (LGWVLTSAALLIALVLSGDAC) threads the bilayer. Topologically, residues 181 to 217 (RHRSRVVDPVSKQAMCYENAGNMTADWRLHVRTVSVT) are extracellular. A helical membrane pass occupies residues 218 to 238 (AGFLLPLALLILFYALTWCVV). The Cytoplasmic segment spans residues 239 to 251 (RRTKLQARRKVRG). Residues 252–272 (VIVAVVLLFFVFCFPYHVLNL) form a helical membrane-spanning segment. At 273–293 (LDTLLRRRWIRDSCYTRGLIN) the chain is on the extracellular side. The helical transmembrane segment at 294-314 (VGLAVTSLLQALYSAVVPLIY) threads the bilayer. Residues 315–342 (SCLGSLFRQRMYGLFQSLRQSFMSGATT) are Cytoplasmic-facing.

This sequence belongs to the G-protein coupled receptor 1 family. In terms of assembly, interacts with protein K7; this interaction promotes vGPCR proteasomal degradation. Interacts with host CADM1; this interaction is essential for chronic NF-kappa-B activation.

It localises to the host cell membrane. Its function is as follows. Receptor that signals constitutively via several signaling pathways including PI3K/AKT as well as mitogen- and stress-activated/MAP kinases. Promotes host cell proliferation and survival, modulates cell migration, stimulates angiogenesis, and recruits inflammatory cells, both in expressing cells and in neighboring cells. Maintains chronic activation of NF-kappa-B via interaction with host CADM1. The protein is viral G-protein coupled receptor (ORF74) of Human herpesvirus 8 type P (isolate GK18) (HHV-8).